A 366-amino-acid chain; its full sequence is 5-hydroxytryptamine receptor 1F (366 aa).

The Extracellular segment spans residues 1–24 (MDFLNSSDQNLTSEELLNRMPSKI). Asn-5 and Asn-10 each carry an N-linked (GlcNAc...) asparagine glycan. Residues 25-49 (LVSLTLSGLALMTTTINSLVIAAII) traverse the membrane as a helical segment. The Cytoplasmic segment spans residues 50 to 59 (VTRKLHHPAN). The chain crosses the membrane as a helical span at residues 60–81 (YLICSLAVTDFLVAVLVMPFSI). The Extracellular segment spans residues 82–96 (VYIVRESWIMGQVVC). Cysteines 96 and 172 form a disulfide. The chain crosses the membrane as a helical span at residues 97 to 119 (DIWLSVDITCCTCSILHLSAIAL). 2 residues coordinate serotonin: Asp-103 and Cys-107. Positions 120–122 (DRY) match the DRY motif; important for ligand-induced conformation changes motif. Residues 120–139 (DRYRAITDAVEYARKRTPKH) lie on the Cytoplasmic side of the membrane. The helical transmembrane segment at 140–159 (AGIMITIVWIISVFISMPPL) threads the bilayer. The Extracellular portion of the chain corresponds to 160-178 (FWRHQGTSRDDECIIKHDH). The chain crosses the membrane as a helical span at residues 179 to 202 (IVSTIYSTFGAFYIPLALILILYY). The Cytoplasmic portion of the chain corresponds to 203–291 (KIYRAAKTLY…KISGTRERKA (89 aa)). Residues 292 to 315 (ATTLGLILGAFVICWLPFFVKELV) traverse the membrane as a helical segment. Topologically, residues 316 to 327 (VNVCDKCKISEE) are extracellular. The chain crosses the membrane as a helical span at residues 328 to 350 (MSNFLAWLGYLNSLINPLIYTIF). Positions 343–347 (NPLIY) match the NPxxY motif; important for ligand-induced conformation changes and signaling motif. Over 351 to 366 (NEDFKKAFQKLVRCRC) the chain is Cytoplasmic.

The protein belongs to the G-protein coupled receptor 1 family.

The protein localises to the cell membrane. In terms of biological role, G-protein coupled receptor for 5-hydroxytryptamine (serotonin). Also functions as a receptor for various alkaloids and psychoactive substances. Receptor for lasmiditan, a drug for the treatment of acute migraine. Ligand binding causes a conformation change that triggers signaling via guanine nucleotide-binding proteins (G proteins) and modulates the activity of downstream effectors, such as adenylate cyclase. HTR1F is coupled to G(i)/G(o) G alpha proteins and mediates inhibitory neurotransmission by inhibiting adenylate cyclase activity. The protein is 5-hydroxytryptamine receptor 1F of Homo sapiens (Human).